The chain runs to 542 residues: Chaperonin GroEL 2 (542 aa).

Residues 30-33 (TLGP), Lys-51, 87-91 (DGTTT), Gly-415, and Asp-496 contribute to the ATP site.

The protein belongs to the chaperonin (HSP60) family. As to quaternary structure, forms a cylinder of 14 subunits composed of two heptameric rings stacked back-to-back. Interacts with the co-chaperonin GroES.

The protein resides in the cytoplasm. The enzyme catalyses ATP + H2O + a folded polypeptide = ADP + phosphate + an unfolded polypeptide.. Together with its co-chaperonin GroES, plays an essential role in assisting protein folding. The GroEL-GroES system forms a nano-cage that allows encapsulation of the non-native substrate proteins and provides a physical environment optimized to promote and accelerate protein folding. The sequence is that of Chaperonin GroEL 2 from Rhizobium etli (strain ATCC 51251 / DSM 11541 / JCM 21823 / NBRC 15573 / CFN 42).